We begin with the raw amino-acid sequence, 186 residues long: Ribosome maturation factor RimP (186 aa).

The protein belongs to the RimP family.

The protein localises to the cytoplasm. In terms of biological role, required for maturation of 30S ribosomal subunits. This Novosphingobium aromaticivorans (strain ATCC 700278 / DSM 12444 / CCUG 56034 / CIP 105152 / NBRC 16084 / F199) protein is Ribosome maturation factor RimP.